Here is a 292-residue protein sequence, read N- to C-terminus: MEIMMGQGRLAIEKIVDPESFKENTIGESSFEDNEVGPGAVVGTAQIGDQDCTIIASDAMAMNERFPVVYAGIIGLEEGYKMAMAVYKTIEADKEKKGTEKRPILLIVDTPGNGPGKQEEIFGMNKSTGAYQLALAEARKAGHPIVAMVIGRAISGAFLCHGLQADRILSLSSKFETMIHVMPLTSVSVITKLDIERLEELSKTNPVFAAGPDFFYQLGGVEELVEEVDGMRSCILKHIAEIREMKAAGEEARLGPWGRGALGEQRGGRMIRGKVMAMMDKQFFAFAEQNLY.

Positions 1-281 (MEIMMGQGRL…RGKVMAMMDK (281 aa)) constitute a CoA carboxyltransferase C-terminal domain.

Its subcellular location is the cytoplasm. The enzyme catalyses N(6)-biotinyl-L-lysyl-[protein] + malonyl-[ACP] = N(6)-carboxybiotinyl-L-lysyl-[protein] + acetyl-[ACP]. Gamma subunit of the biotin-dependent malonate decarboxylase multienzyme complex (EC 7.2.4.4). The two subunits MADC and MADD are required for the transfer of the malonate carboxy group from the acyl-carrier protein (ACP) to the prosthetic group of the biotin carrier MADF. Required for the regeneration of ACP. This chain is Malonyl-S-ACP:biotin-protein carboxyltransferase MADD (madD), found in Malonomonas rubra.